The chain runs to 428 residues: Dihydroorotase (428 aa).

His-59 and His-61 together coordinate Zn(2+). Residues 61–63 and Asn-93 each bind substrate; that span reads HLR. Zn(2+) is bound by residues Asp-151, His-178, and His-231. Residue Asn-277 coordinates substrate. Asp-304 lines the Zn(2+) pocket. Residue Asp-304 is part of the active site. Substrate contacts are provided by residues His-308 and 322 to 323; that span reads FG.

Belongs to the metallo-dependent hydrolases superfamily. DHOase family. Class I DHOase subfamily. Requires Zn(2+) as cofactor.

The enzyme catalyses (S)-dihydroorotate + H2O = N-carbamoyl-L-aspartate + H(+). Its pathway is pyrimidine metabolism; UMP biosynthesis via de novo pathway; (S)-dihydroorotate from bicarbonate: step 3/3. Functionally, catalyzes the reversible cyclization of carbamoyl aspartate to dihydroorotate. The chain is Dihydroorotase from Bacillus cereus (strain B4264).